Here is a 372-residue protein sequence, read N- to C-terminus: Probable L-tyrosine/L-aspartate decarboxylase (372 aa).

K215 is modified (N6-(pyridoxal phosphate)lysine).

It belongs to the group II decarboxylase family. MfnA subfamily. The cofactor is pyridoxal 5'-phosphate.

It carries out the reaction L-tyrosine + H(+) = tyramine + CO2. The enzyme catalyses L-aspartate + H(+) = beta-alanine + CO2. Its pathway is cofactor biosynthesis; methanofuran biosynthesis. It participates in cofactor biosynthesis; coenzyme A biosynthesis. In terms of biological role, catalyzes the decarboxylation of L-tyrosine to produce tyramine for methanofuran biosynthesis. Can also catalyze the decarboxylation of L-aspartate to produce beta-alanine for coenzyme A (CoA) biosynthesis. The polypeptide is Probable L-tyrosine/L-aspartate decarboxylase (Methanopyrus kandleri (strain AV19 / DSM 6324 / JCM 9639 / NBRC 100938)).